We begin with the raw amino-acid sequence, 236 residues long: 1-(5-phosphoribosyl)-5-[(5-phosphoribosylamino)methylideneamino] imidazole-4-carboxamide isomerase (236 aa).

Residue aspartate 8 is the Proton acceptor of the active site. Aspartate 127 serves as the catalytic Proton donor.

The protein belongs to the HisA/HisF family.

It is found in the cytoplasm. It catalyses the reaction 1-(5-phospho-beta-D-ribosyl)-5-[(5-phospho-beta-D-ribosylamino)methylideneamino]imidazole-4-carboxamide = 5-[(5-phospho-1-deoxy-D-ribulos-1-ylimino)methylamino]-1-(5-phospho-beta-D-ribosyl)imidazole-4-carboxamide. Its pathway is amino-acid biosynthesis; L-histidine biosynthesis; L-histidine from 5-phospho-alpha-D-ribose 1-diphosphate: step 4/9. This Sulfurimonas denitrificans (strain ATCC 33889 / DSM 1251) (Thiomicrospira denitrificans (strain ATCC 33889 / DSM 1251)) protein is 1-(5-phosphoribosyl)-5-[(5-phosphoribosylamino)methylideneamino] imidazole-4-carboxamide isomerase.